The following is a 294-amino-acid chain: Lycopene elongase/hydratase (294 aa).

Transmembrane regions (helical) follow at residues 31-51 (FWLY…DGPG), 53-73 (LFSP…NVFL), 115-135 (LALL…LAWM), 160-180 (GLYI…APPA), 182-202 (AVVG…IPDI), 222-242 (TYYY…FTHW), 243-263 (VFGV…GVGV), and 274-294 (AINT…MLYG).

The protein belongs to the UbiA prenyltransferase family.

The protein localises to the cell membrane. The catalysed reaction is all-trans-lycopene + dimethylallyl diphosphate + H2O = dihydroisopentenyldehydrorhodopin + diphosphate. It carries out the reaction isopentenyldehydrorhodopin + dimethylallyl diphosphate + H2O = dihydrobisanhydrobacterioruberin + diphosphate. It participates in carotenoid biosynthesis. Involved in the biosynthesis of the acyclic C50 carotenoid bacterioruberin (BR). Acts as a bifunctional elongase/hydratase that catalyzes the elongation of lycopene by attaching a C(5) isoprene unit at C-2, as well as the hydroxylation of the previous end of the molecule. The enzyme acts at both ends of the substrate, and catalyzes the conversion of lycopene to the C(45) intermediate dihydroisopentenyldehydrorhodopin (DH-IDR) and the conversion of isopentenyldehydrorhodopin (IDR) to the C(50) carotenoid dihydrobisanhydrobacterioruberin (DH-BABR). Can also catalyze the conversion of lycopene to tetrahydrobisanhydrobacterioruberin (TH-BABR). The polypeptide is Lycopene elongase/hydratase (Haloarcula japonica (strain ATCC 49778 / DSM 6131 / JCM 7785 / NBRC 101032 / NCIMB 13157 / TR-1)).